The chain runs to 707 residues: Polyribonucleotide nucleotidyltransferase (707 aa).

Asp-486 and Asp-492 together coordinate Mg(2+). The region spanning 553-612 (PTVTTLRVLPDKIPIIIGPAGKNIKKIIEETKVKIDLDPEGLVKIYATSKEAAEKAVSMI) is the KH domain. The region spanning 622–690 (GEVYMGKVTR…DQGRIKVSLK (69 aa)) is the S1 motif domain.

The protein belongs to the polyribonucleotide nucleotidyltransferase family. It depends on Mg(2+) as a cofactor.

It is found in the cytoplasm. It catalyses the reaction RNA(n+1) + phosphate = RNA(n) + a ribonucleoside 5'-diphosphate. In terms of biological role, involved in mRNA degradation. Catalyzes the phosphorolysis of single-stranded polyribonucleotides processively in the 3'- to 5'-direction. This is Polyribonucleotide nucleotidyltransferase from Sulfurihydrogenibium azorense (strain DSM 15241 / OCM 825 / Az-Fu1).